A 588-amino-acid polypeptide reads, in one-letter code: Adenine deaminase (588 aa).

This sequence belongs to the metallo-dependent hydrolases superfamily. Adenine deaminase family. In terms of assembly, homodimer. The cofactor is Mn(2+).

It catalyses the reaction adenine + H2O + H(+) = hypoxanthine + NH4(+). The protein is Adenine deaminase of Escherichia coli O45:K1 (strain S88 / ExPEC).